The sequence spans 246 residues: Large ribosomal subunit protein uL30 (246 aa).

This sequence belongs to the universal ribosomal protein uL30 family.

Binds to G-rich structures in 28S rRNA and in mRNAs. Plays a regulatory role in the translation apparatus; inhibits cell-free translation of mRNAs. This Dictyostelium discoideum (Social amoeba) protein is Large ribosomal subunit protein uL30 (rpl7).